A 554-amino-acid polypeptide reads, in one-letter code: MRDCKVGLDFGTTFSTVSTLVNNSMYVLRLGDSAYIPTCIAITPGGEAIIGGAAEVLSGDDTPHCFFYDLKRWVGVDDNTFKFAMNKIRPKYVAELVEGEVYLTGINKGFSIKLSVKQLIKAYIETIVRLLASSYSLRVIDLNQSVPADYKNAQRLAARSVLKALSFPCRRIINEPSAAAVYCVSRYPNYNYFLVYDFGGGTFDVSLIGKYKSYVTVIDTEGDSFLGGRDIDKSIEDYLVGKYNIKKVIPATYLALIKEECNNTNKSIFTILFDDGSVQVVEFSKSELEKCVRPFVERSIKLINDVVVRNKLTSGVIYMVGGSSLLQPVQDMVRSYASTKGLTLVADQDMRSAVSYGCSVLHKLEDNKEIVYIDCNSHPLSDISFNCDPEPIIRKPMSIPYTHTVKMRHDRPLKTIVNIYEGSNLFMPENDWLISSNINTTDFAKVGEEYSKVYEYDIDGIITLKIRNEVTGKMFTLPNSFTKSDNIKPITFKLTQLSNTDDLATLTSLLGYHDKNFERFYGLFNVPTILIKEIDKLGGFKTLYRRLKSMNANF.

It belongs to the heat shock protein 70 family.

It is found in the virion. Functionally, transports viral genome to neighboring plant cells directly through plasmosdesmata, without any budding. The movement protein allows efficient cell to cell propagation, by bypassing the host cell wall barrier. Two movement proteins, p6, Hsp70h and three structural proteins, CP, CPm, and P64 are essential for cell-cell movement. Also plays a role in virion formation. Together with CPm and p64, encapsidates the 5'-terminal portion of the viral genome. The chain is Movement protein Hsp70h from Lettuce infectious yellows virus (isolate United States/92) (LIYV).